Here is a 600-residue protein sequence, read N- to C-terminus: MSDKQQFIRNFSIIAHIDHGKSTLADRLLEIGQVTNDRTKKDQILDSMDIERERGITIKANNATFDYLAEDGNTYIMNLLDTPGHVDFTYEVSRSLKACEGVLLIVDASQGVEAQTLANLYLAMEQDLEILPVMNKIDLPAADVEKTKIQIEESLGLDPQKAVAISAKTGLNVKEVLEQITKQIPSPKGNSNAPLKALVYDSYFDPYMGVVIKIRIFDGRIKKGDRILMMSTGKDFTVNEVGINRINLTPKESLETGEVGYIIAGIKKVSDAKTGDTVTLFSNPTKESVPGYKEAKPMVFAGLFPINGEQFDELVDAIEKLKLNDAALVFEKESSIALGFGFRVGYLGLLHMEIVQERLEREFNLDLITTAPSVKYIIRSKNGEVEEIDNPSRFPEPITIESTEEPYVKATVITPNEYVGNIMSLAMDKRGIQLDTVYLTQDKVQLTYEIPLAELIFEFYDKLKSFTRGYASLDYEPSGYKASQLVKMDILVNGEPVDALSMIVHRSKAEQRGREIIEKLKDLIPRHQFMIPLQAAVGGKILARESISALRKNVTAKCYGGDITRKKKLLEKQKEGKKRMKQIGNVEIPQEAFLAVLKTS.

In terms of domain architecture, tr-type G spans 6–188; sequence QFIRNFSIIA…QITKQIPSPK (183 aa). GTP-binding positions include 18 to 23 and 135 to 138; these read DHGKST and NKID.

Belongs to the TRAFAC class translation factor GTPase superfamily. Classic translation factor GTPase family. LepA subfamily.

Its subcellular location is the cell inner membrane. It carries out the reaction GTP + H2O = GDP + phosphate + H(+). Required for accurate and efficient protein synthesis under certain stress conditions. May act as a fidelity factor of the translation reaction, by catalyzing a one-codon backward translocation of tRNAs on improperly translocated ribosomes. Back-translocation proceeds from a post-translocation (POST) complex to a pre-translocation (PRE) complex, thus giving elongation factor G a second chance to translocate the tRNAs correctly. Binds to ribosomes in a GTP-dependent manner. The sequence is that of Elongation factor 4 from Leptospira interrogans serogroup Icterohaemorrhagiae serovar copenhageni (strain Fiocruz L1-130).